The chain runs to 465 residues: UDP-N-acetylmuramate--L-alanine ligase (465 aa).

An ATP-binding site is contributed by 125–131 (GTHGKTT).

Belongs to the MurCDEF family.

Its subcellular location is the cytoplasm. It catalyses the reaction UDP-N-acetyl-alpha-D-muramate + L-alanine + ATP = UDP-N-acetyl-alpha-D-muramoyl-L-alanine + ADP + phosphate + H(+). The protein operates within cell wall biogenesis; peptidoglycan biosynthesis. Cell wall formation. The protein is UDP-N-acetylmuramate--L-alanine ligase of Deinococcus geothermalis (strain DSM 11300 / CIP 105573 / AG-3a).